Here is a 483-residue protein sequence, read N- to C-terminus: Dual specificity protein kinase CLK1 (483 aa).

Residues 1–49 (MRHSKRTYCPDWDERDWDYGTWRSSSSHKRKKRSHSSAREQKRCRYDHS) form a disordered region. Positions 26–36 (SSHKRKKRSHS) are enriched in basic residues. The Nuclear localization signal signature appears at 29–33 (KRKKR). The span at 37 to 49 (SAREQKRCRYDHS) shows a compositional bias: basic and acidic residues. A Phosphoserine modification is found at S61. The segment covering 84 to 111 (EPGHPYGEPGSRYQMHSSKSSGRSGRSS) has biased composition (low complexity). The tract at residues 84–146 (EPGHPYGEPG…SRSVEDDEEG (63 aa)) is disordered. Basic residues predominate over residues 112–137 (YKSKHRSRHHTSQHHSHGKSHRRKRS). A Phosphoserine modification is found at S139. Residues 160 to 476 (YEIVDTLGEG…LKEALKHPFF (317 aa)) enclose the Protein kinase domain. ATP contacts are provided by residues 166 to 174 (LGEGAFGKV) and K190. The active-site Proton acceptor is D287.

The protein belongs to the protein kinase superfamily. CMGC Ser/Thr protein kinase family. Lammer subfamily. Interacts with PPIG and UBL5. In terms of processing, autophosphorylates on all three types of residues.

The protein resides in the nucleus. The enzyme catalyses L-seryl-[protein] + ATP = O-phospho-L-seryl-[protein] + ADP + H(+). It carries out the reaction L-threonyl-[protein] + ATP = O-phospho-L-threonyl-[protein] + ADP + H(+). It catalyses the reaction L-tyrosyl-[protein] + ATP = O-phospho-L-tyrosyl-[protein] + ADP + H(+). Regulates splicing of its own pre-mRNA according to its kinase activity; increased expression of the catalytically active form influences splicing to generate the catalytically inactive splicing variant lacking the kinase domain. Leucettine L41 inhibits its kinase activity and affects the regulation of alternative splicing mediated by phosphorylation of SR proteins. Dual specificity kinase acting on both serine/threonine and tyrosine-containing substrates. Phosphorylates serine- and arginine-rich (SR) proteins of the spliceosomal complex and may be a constituent of a network of regulatory mechanisms that enable SR proteins to control RNA splicing. Phosphorylates: SRSF1, SRSF3 and PTPN1. Regulates the alternative splicing of tissue factor (F3) pre-mRNA in endothelial cells. In Mus musculus (Mouse), this protein is Dual specificity protein kinase CLK1.